The following is a 125-amino-acid chain: U-scoloptoxin(05)-Sm1a (125 aa).

Residues 1–20 (MNVLYTKIFFILILTRTSSA) form the signal peptide.

Belongs to the scoloptoxin-05 family. Post-translationally, contains 4 disulfide bonds. As to expression, expressed by the venom gland.

The protein resides in the secreted. The protein is U-scoloptoxin(05)-Sm1a of Scolopendra morsitans (Tanzanian blue ringleg centipede).